Here is a 305-residue protein sequence, read N- to C-terminus: Delta-9 acyl-lipid desaturase 1 (305 aa).

The tract at residues 1–20 (MSLSASEKEENNKKMAADKA) is disordered. The next 2 membrane-spanning stretches (helical) occupy residues 39–59 (IVKA…PFNF) and 60–80 (TWPA…GITV). Residues histidine 83, histidine 88, histidine 120, histidine 123, and histidine 124 each coordinate Fe cation. The Histidine box-1 signature appears at 83-88 (HRNLAH). A Histidine box-2 motif is present at residues 120–124 (HRYHH). A helical membrane pass occupies residues 180–200 (VLYHILTFGFLLYYFGGLSFL). 4 residues coordinate Fe cation: histidine 223, histidine 252, histidine 255, and histidine 256. Positions 252-256 (HNNHH) match the Histidine box-3 motif. Residues 268–288 (WWQIDISWYIVRFLEIIGLAT) traverse the membrane as a helical segment.

Belongs to the fatty acid desaturase type 1 family. Fe cation serves as cofactor. Strongly expressed in inflorescence meristems, leaves, and flowers, and weakly in roots and seedpods.

It localises to the endoplasmic reticulum membrane. The protein resides in the plastid. The protein localises to the chloroplast membrane. It functions in the pathway lipid metabolism; polyunsaturated fatty acid biosynthesis. Functionally, involved in delta-9 desaturation of fatty acids. Involved in the production of very-long-chain fatty acids (VLCFAs). May desaturate chloroplastic monogalactosyl diacylglycerol (MGDG) and alter chloroplast membrane fluidity, which is required to prime a cold acclimation response. This Arabidopsis thaliana (Mouse-ear cress) protein is Delta-9 acyl-lipid desaturase 1.